Consider the following 95-residue polypeptide: Aspartyl/glutamyl-tRNA(Asn/Gln) amidotransferase subunit C (95 aa).

This sequence belongs to the GatC family. As to quaternary structure, heterotrimer of A, B and C subunits.

It catalyses the reaction L-glutamyl-tRNA(Gln) + L-glutamine + ATP + H2O = L-glutaminyl-tRNA(Gln) + L-glutamate + ADP + phosphate + H(+). It carries out the reaction L-aspartyl-tRNA(Asn) + L-glutamine + ATP + H2O = L-asparaginyl-tRNA(Asn) + L-glutamate + ADP + phosphate + 2 H(+). Functionally, allows the formation of correctly charged Asn-tRNA(Asn) or Gln-tRNA(Gln) through the transamidation of misacylated Asp-tRNA(Asn) or Glu-tRNA(Gln) in organisms which lack either or both of asparaginyl-tRNA or glutaminyl-tRNA synthetases. The reaction takes place in the presence of glutamine and ATP through an activated phospho-Asp-tRNA(Asn) or phospho-Glu-tRNA(Gln). This chain is Aspartyl/glutamyl-tRNA(Asn/Gln) amidotransferase subunit C, found in Jannaschia sp. (strain CCS1).